Here is a 425-residue protein sequence, read N- to C-terminus: Serine--tRNA ligase (425 aa).

231–233 (TAE) serves as a coordination point for L-serine. ATP contacts are provided by residues 262-264 (RTE) and Val278. Position 285 (Glu285) interacts with L-serine. 349-352 (EVTS) contacts ATP. L-serine is bound at residue Thr384.

Belongs to the class-II aminoacyl-tRNA synthetase family. Type-1 seryl-tRNA synthetase subfamily. In terms of assembly, homodimer. The tRNA molecule binds across the dimer.

It localises to the cytoplasm. It catalyses the reaction tRNA(Ser) + L-serine + ATP = L-seryl-tRNA(Ser) + AMP + diphosphate + H(+). It carries out the reaction tRNA(Sec) + L-serine + ATP = L-seryl-tRNA(Sec) + AMP + diphosphate + H(+). It participates in aminoacyl-tRNA biosynthesis; selenocysteinyl-tRNA(Sec) biosynthesis; L-seryl-tRNA(Sec) from L-serine and tRNA(Sec): step 1/1. Functionally, catalyzes the attachment of serine to tRNA(Ser). Is also able to aminoacylate tRNA(Sec) with serine, to form the misacylated tRNA L-seryl-tRNA(Sec), which will be further converted into selenocysteinyl-tRNA(Sec). This chain is Serine--tRNA ligase, found in Dictyoglomus thermophilum (strain ATCC 35947 / DSM 3960 / H-6-12).